Here is a 235-residue protein sequence, read N- to C-terminus: 3-deoxy-D-manno-octulosonic acid kinase (235 aa).

Asp167 is an active-site residue.

Belongs to the protein kinase superfamily. KdkA/RfaP family.

The protein resides in the cell inner membrane. It catalyses the reaction an alpha-Kdo-(2-&gt;6)-lipid IVA + ATP = a 4-O-phospho-alpha-Kdo-(2-&gt;6)-lipid IVA + ADP + H(+). The protein operates within bacterial outer membrane biogenesis; LPS core biosynthesis. Catalyzes the ATP-dependent phosphorylation of the 3-deoxy-D-manno-octulosonic acid (Kdo) residue in Kdo-lipid IV(A) at the 4-OH position. This chain is 3-deoxy-D-manno-octulosonic acid kinase (kdkA), found in Vibrio cholerae serotype O1 (strain ATCC 39315 / El Tor Inaba N16961).